The following is a 1044-amino-acid chain: Probable pre-mRNA-splicing factor ATP-dependent RNA helicase DEAH6 (1044 aa).

Disordered regions lie at residues 99-134 (EADH…SEQL) and 152-211 (RRKV…VRRD). Positions 157 to 167 (EDEDDGTESEE) are enriched in acidic residues. A compositionally biased stretch (basic and acidic residues) spans 168-211 (ERLRDQREREELEQHLRERDTARTRKLTEPKMSKKEQEEFVRRD). A Helicase ATP-binding domain is found at 414–577 (LNAVKDHQVL…FDQAPIFRFP (164 aa)). An ATP-binding site is contributed by 427-434 (GETGSGKT). Residues 524–527 (DEAH) carry the DEAH box motif. A Helicase C-terminal domain is found at 599–775 (AITTVLTIHV…SVVLSLKSLG (177 aa)).

The protein belongs to the DEAD box helicase family. DEAH subfamily. PRP2 sub-subfamily. As to expression, predominantly expressed in flowers.

The enzyme catalyses ATP + H2O = ADP + phosphate + H(+). Its function is as follows. May be involved in pre-mRNA splicing. In Arabidopsis thaliana (Mouse-ear cress), this protein is Probable pre-mRNA-splicing factor ATP-dependent RNA helicase DEAH6.